A 99-amino-acid polypeptide reads, in one-letter code: Prostate and testis expressed protein 14 (99 aa).

An N-terminal signal peptide occupies residues 1-21 (MEKYLLLLLLGIFLRVGFLQA). A UPAR/Ly6 domain is found at 22 to 99 (LTCVSCGRLN…CDHQNLCNKP (78 aa)). Cystine bridges form between cysteine 24–cysteine 51, cysteine 27–cysteine 36, cysteine 43–cysteine 69, cysteine 73–cysteine 89, and cysteine 90–cysteine 96. Asparagine 31 carries N-linked (GlcNAc...) asparagine glycosylation. A glycan (N-linked (GlcNAc...) asparagine) is linked at asparagine 75.

The protein belongs to the PATE family. In terms of assembly, monomer. In terms of processing, glycosylated. In terms of tissue distribution, predominantly expressed in the seminal vesicles. Expressed in prostate, and to a lesser extent in the cauda epididymis.

Its subcellular location is the secreted. This chain is Prostate and testis expressed protein 14, found in Mus musculus (Mouse).